The primary structure comprises 332 residues: Protein pbn1 (332 aa).

Residues 1–301 lie on the Lumenal side of the membrane; that stretch reads MDLQRTNQDT…SIPIADLSYK (301 aa). 4 N-linked (GlcNAc...) asparagine glycosylation sites follow: Asn36, Asn56, Asn112, and Asn206. The helical transmembrane segment at 302 to 324 threads the bilayer; the sequence is HVVEWVTNGVAIFSFFYLLLYLW. Residues 325 to 332 are Cytoplasmic-facing; the sequence is KRFRYAKD.

This sequence belongs to the PIGX family.

It localises to the endoplasmic reticulum membrane. It participates in glycolipid biosynthesis; glycosylphosphatidylinositol-anchor biosynthesis. Functionally, required for proper folding and/or the stability of a subset of proteins in the endoplasmic reticulum. Component of glycosylphosphatidylinositol-mannosyltransferase 1 which transfers the first of the 4 mannoses in the GPI-anchor precursors during GPI-anchor biosynthesis. Probably acts by stabilizing the mannosyltransferase gpi14. The protein is Protein pbn1 (pbn1) of Schizosaccharomyces pombe (strain 972 / ATCC 24843) (Fission yeast).